A 268-amino-acid polypeptide reads, in one-letter code: Basic endochitinase CHB4 (268 aa).

Residues 1 to 24 form the signal peptide; the sequence is MALTKLSLVLFLCFLGLYSETVKS. The Chitin-binding type-1 domain occupies 25 to 59; it reads QNCGCAPNLCCSQFGYCGSTDAYCGTGCRSGPCRS. Disulfide bonds link C27–C35, C29–C41, C34–C48, C52–C57, C92–C137, C150–C159, and C236–C268. The tract at residues 71–268 is catalytic; the sequence is SVGSIVTQAF…GVDPGPNLSC (198 aa). Residue E132 is the Proton donor of the active site. N265 carries N-linked (GlcNAc...) asparagine glycosylation.

Belongs to the glycosyl hydrolase 19 family. Chitinase class I subfamily.

Its subcellular location is the secreted. The protein resides in the extracellular space. The catalysed reaction is Random endo-hydrolysis of N-acetyl-beta-D-glucosaminide (1-&gt;4)-beta-linkages in chitin and chitodextrins.. Functionally, defense against chitin-containing fungal pathogens. In Brassica napus (Rape), this protein is Basic endochitinase CHB4.